A 526-amino-acid polypeptide reads, in one-letter code: ATP synthase subunit alpha (526 aa).

ATP is bound at residue 178-185 (GDRQTGKT).

Belongs to the ATPase alpha/beta chains family. F-type ATPases have 2 components, CF(1) - the catalytic core - and CF(0) - the membrane proton channel. CF(1) has five subunits: alpha(3), beta(3), gamma(1), delta(1), epsilon(1). CF(0) has four main subunits: a(1), b(1), b'(1) and c(9-12).

The protein localises to the cell membrane. The enzyme catalyses ATP + H2O + 4 H(+)(in) = ADP + phosphate + 5 H(+)(out). Functionally, produces ATP from ADP in the presence of a proton gradient across the membrane. The alpha chain is a regulatory subunit. This chain is ATP synthase subunit alpha, found in Roseiflexus castenholzii (strain DSM 13941 / HLO8).